Here is a 263-residue protein sequence, read N- to C-terminus: LIM and SH3 domain protein 1 (263 aa).

Met1 is subject to N-acetylmethionine. The LIM zinc-binding domain occupies 5 to 56 (CARCGKIVYPTEKVNCLDKYWHKACFHCETCKMTLNMKNYKGYEKKPYCNAH). N6-acetyllysine is present on Lys42. Nebulin repeat units follow at residues 61–95 (SFTMVADTPENLRLKQQSELQSQVRYKEEFEKNKG) and 97–131 (GFSVVADTPELQRIKKTQDQISNIKYHEEFEKSRM). Thr68 carries the post-translational modification Phosphothreonine. Lys75 bears the N6-methyllysine mark. Position 99 is a phosphoserine (Ser99). A Phosphothreonine modification is found at Thr104. Lys112 is subject to N6-succinyllysine. Phosphoserine occurs at positions 118 and 134. The tract at residues 123–207 (HEEFEKSRMG…QRSAPGGGGK (85 aa)) is disordered. Polar residues predominate over residues 148 to 162 (DSSSYRRPTEQQQPQ). Thr156 is subject to Phosphothreonine; by PKA. Residues 204–263 (GGGKRYRAVYDYSAADEDEVSFQDGDTIVNVQQIDDGWMYGTVERTGDTGMLPANYVEAI) form the SH3 domain.

As to quaternary structure, interacts with F-actin. Interacts with KBTBD10. Interacts with ANKRD54.

The protein resides in the cytoplasm. It is found in the cell cortex. Its subcellular location is the cytoskeleton. Plays an important role in the regulation of dynamic actin-based, cytoskeletal activities. Agonist-dependent changes in LASP1 phosphorylation may also serve to regulate actin-associated ion transport activities, not only in the parietal cell but also in certain other F-actin-rich secretory epithelial cell types. In Mus musculus (Mouse), this protein is LIM and SH3 domain protein 1 (Lasp1).